A 56-amino-acid polypeptide reads, in one-letter code: Large ribosomal subunit protein uL30 (56 aa).

This sequence belongs to the universal ribosomal protein uL30 family. In terms of assembly, part of the 50S ribosomal subunit.

The sequence is that of Large ribosomal subunit protein uL30 from Nitratidesulfovibrio vulgaris (strain DSM 19637 / Miyazaki F) (Desulfovibrio vulgaris).